We begin with the raw amino-acid sequence, 315 residues long: Methionyl-tRNA formyltransferase (315 aa).

Residue 113–116 (SLLP) participates in (6S)-5,6,7,8-tetrahydrofolate binding.

It belongs to the Fmt family.

It carries out the reaction L-methionyl-tRNA(fMet) + (6R)-10-formyltetrahydrofolate = N-formyl-L-methionyl-tRNA(fMet) + (6S)-5,6,7,8-tetrahydrofolate + H(+). Attaches a formyl group to the free amino group of methionyl-tRNA(fMet). The formyl group appears to play a dual role in the initiator identity of N-formylmethionyl-tRNA by promoting its recognition by IF2 and preventing the misappropriation of this tRNA by the elongation apparatus. The protein is Methionyl-tRNA formyltransferase of Escherichia coli O45:K1 (strain S88 / ExPEC).